Here is a 442-residue protein sequence, read N- to C-terminus: O-acetyl-L-homoserine sulfhydrylase (442 aa).

A disordered region spans residues 1–32 (MVGPSGESMPRNFKPETIALHGGQEPDPTTTS). At K216 the chain carries N6-(pyridoxal phosphate)lysine.

Belongs to the trans-sulfuration enzymes family. It depends on pyridoxal 5'-phosphate as a cofactor.

It catalyses the reaction O-acetyl-L-homoserine + hydrogen sulfide = L-homocysteine + acetate. Its pathway is amino-acid biosynthesis; L-methionine biosynthesis via de novo pathway; L-homocysteine from O-acetyl-L-homoserine: step 1/1. Feedback inhibited at very high concentrations of methionine or S-adenosylmethionine. Functionally, catalyzes the conversion of O-acetyl-L-homoserine (OAH) into homocysteine in the methionine biosynthesis pathway. Can also use O-succinyl-homoserine (OSH), although at low efficiency. In Leptospira meyeri, this protein is O-acetyl-L-homoserine sulfhydrylase.